A 324-amino-acid chain; its full sequence is Type II restriction enzyme AplI (324 aa).

It belongs to the BsuBI/PstI type II restriction endonuclease family. Mg(2+) is required as a cofactor.

It catalyses the reaction Endonucleolytic cleavage of DNA to give specific double-stranded fragments with terminal 5'-phosphates.. Activated by K(+) and Na(+) ions, whereas NH(4)(+) ions appear to inhibit endonuclease activity. Its function is as follows. A P subtype restriction enzyme that recognizes the double-stranded sequence 5'-CTGCAG-3' and cleaves after A-5. The polypeptide is Type II restriction enzyme AplI (aplIR) (Arthrospira platensis (strain NIES-39 / UTEX 3086 / IAM M-135) (Spirulina platensis)).